Consider the following 496-residue polypeptide: Probable chlorophyll(ide) b reductase NYC1, chloroplastic (496 aa).

Residues 1-43 constitute a chloroplast transit peptide; sequence MTTLTKIQVYPQVLEHRLFFRDPIRVGSRLTCRERSNRVYVHR. Helical transmembrane passes span 105-125 and 132-152; these read YIVT…LSGG and LVWY…ANMV. Residue 166 to 190 coordinates NAD(+); it reads ITGSTRGLGKALAREFLLSGDRVIV. A coiled-coil region spans residues 195–224; sequence SESVDMTVKELEQNLKEIMSNASESARKKL. Tyrosine 330 (proton acceptor) is an active-site residue. A helical transmembrane segment spans residues 470–490; it reads WVSVFSLSVVCAFIILQSTTP.

Belongs to the short-chain dehydrogenases/reductases (SDR) family. As to quaternary structure, interacts with NOL to form a complex that acts as a chlorophyll b reductase. Interacts with HCAR, RCCR, SGR1 and the LHCII complex. Part of a SGR1-CCE-LHCII complex, which acts in chlorophyll breakdown.

Its subcellular location is the plastid. The protein localises to the chloroplast thylakoid membrane. The catalysed reaction is 7(1)-hydroxychlorophyllide a + NAD(+) = chlorophyllide b + NADH + H(+). It carries out the reaction 7(1)-hydroxychlorophyllide a + NADP(+) = chlorophyllide b + NADPH + H(+). Involved in chlorophyll b degradation. Belongs to the chlorophyll catabolic enzymes (CCEs). The sequence is that of Probable chlorophyll(ide) b reductase NYC1, chloroplastic (NYC1) from Arabidopsis thaliana (Mouse-ear cress).